A 314-amino-acid chain; its full sequence is MAQFHYECVESKTDKDRSQYGKFIIEPLARGQGTTVGNALRRVLLSNLEGTAITSVRIAGVNHEFATIKGVREDVLEILLNMKEVVLKSYSEQPQIGRLRVEGPATVTADRFDVPSEVEVIDRSQYIATLSPGSILEMEFRIEKGTGYKAVDRTRDDVATLDFLQIDAIFMPVRKVNYTIEDAHIGSSLEQDRLIMDIWTNGSYTPQDALSNAAGILMSLFEPLKDITNMADIPSGETTDPTSQIPIEELQLSVRAYNCLKRAQINSVADLLDYSQEDLLEIKNFGQKSAEEVIEALQKRLGITLPQEKVAKAT.

Residues 1 to 228 form an alpha N-terminal domain (alpha-NTD) region; the sequence is MAQFHYECVE…SLFEPLKDIT (228 aa). The segment at 240 to 314 is alpha C-terminal domain (alpha-CTD); the sequence is DPTSQIPIEE…LPQEKVAKAT (75 aa).

Belongs to the RNA polymerase alpha chain family. As to quaternary structure, in cyanobacteria the RNAP catalytic core is composed of 2 alpha, 1 beta, 1 beta', 1 gamma and 1 omega subunit. When a sigma factor is associated with the core the holoenzyme is formed, which can initiate transcription.

The enzyme catalyses RNA(n) + a ribonucleoside 5'-triphosphate = RNA(n+1) + diphosphate. DNA-dependent RNA polymerase catalyzes the transcription of DNA into RNA using the four ribonucleoside triphosphates as substrates. The protein is DNA-directed RNA polymerase subunit alpha of Trichodesmium erythraeum (strain IMS101).